The chain runs to 122 residues: S-adenosylmethionine decarboxylase proenzyme (122 aa).

Serine 63 functions as the Schiff-base intermediate with substrate; via pyruvic acid in the catalytic mechanism. Serine 63 carries the pyruvic acid (Ser); by autocatalysis modification. The active-site Proton acceptor; for processing activity is the histidine 68. Catalysis depends on cysteine 83, which acts as the Proton donor; for catalytic activity.

The protein belongs to the prokaryotic AdoMetDC family. Type 1 subfamily. Heterotetramer of two alpha and two beta chains arranged as a dimer of alpha/beta heterodimers. Requires pyruvate as cofactor. Is synthesized initially as an inactive proenzyme. Formation of the active enzyme involves a self-maturation process in which the active site pyruvoyl group is generated from an internal serine residue via an autocatalytic post-translational modification. Two non-identical subunits are generated from the proenzyme in this reaction, and the pyruvate is formed at the N-terminus of the alpha chain, which is derived from the carboxyl end of the proenzyme. The post-translation cleavage follows an unusual pathway, termed non-hydrolytic serinolysis, in which the side chain hydroxyl group of the serine supplies its oxygen atom to form the C-terminus of the beta chain, while the remainder of the serine residue undergoes an oxidative deamination to produce ammonia and the pyruvoyl group blocking the N-terminus of the alpha chain.

It carries out the reaction S-adenosyl-L-methionine + H(+) = S-adenosyl 3-(methylsulfanyl)propylamine + CO2. It participates in amine and polyamine biosynthesis; S-adenosylmethioninamine biosynthesis; S-adenosylmethioninamine from S-adenosyl-L-methionine: step 1/1. Functionally, catalyzes the decarboxylation of S-adenosylmethionine to S-adenosylmethioninamine (dcAdoMet), the propylamine donor required for the synthesis of the polyamines spermine and spermidine from the diamine putrescine. This Methanococcus maripaludis (strain C7 / ATCC BAA-1331) protein is S-adenosylmethionine decarboxylase proenzyme.